We begin with the raw amino-acid sequence, 225 residues long: Methylthioribulose-1-phosphate dehydratase (225 aa).

His106 and His108 together coordinate Zn(2+).

It belongs to the aldolase class II family. MtnB subfamily. Zn(2+) is required as a cofactor.

It carries out the reaction 5-(methylsulfanyl)-D-ribulose 1-phosphate = 5-methylsulfanyl-2,3-dioxopentyl phosphate + H2O. The protein operates within amino-acid biosynthesis; L-methionine biosynthesis via salvage pathway; L-methionine from S-methyl-5-thio-alpha-D-ribose 1-phosphate: step 2/6. Its function is as follows. Catalyzes the dehydration of methylthioribulose-1-phosphate (MTRu-1-P) into 2,3-diketo-5-methylthiopentyl-1-phosphate (DK-MTP-1-P). The chain is Methylthioribulose-1-phosphate dehydratase from Xanthomonas oryzae pv. oryzae (strain KACC10331 / KXO85).